Reading from the N-terminus, the 110-residue chain is Large ribosomal subunit protein uL22 (110 aa).

Belongs to the universal ribosomal protein uL22 family. As to quaternary structure, part of the 50S ribosomal subunit.

Its function is as follows. This protein binds specifically to 23S rRNA; its binding is stimulated by other ribosomal proteins, e.g. L4, L17, and L20. It is important during the early stages of 50S assembly. It makes multiple contacts with different domains of the 23S rRNA in the assembled 50S subunit and ribosome. In terms of biological role, the globular domain of the protein is located near the polypeptide exit tunnel on the outside of the subunit, while an extended beta-hairpin is found that lines the wall of the exit tunnel in the center of the 70S ribosome. This is Large ribosomal subunit protein uL22 from Vibrio campbellii (strain ATCC BAA-1116).